The primary structure comprises 136 residues: Protein YebF (136 aa).

The first 23 residues, 1–23 (MKKTGLALVLATILLGMMGSVHA), serve as a signal peptide directing secretion. Positions 30-117 (KVPACIGLNQ…KSGTMTYTGL (88 aa)) constitute a YebF/Cmi domain. Cys-34 and Cys-107 form a disulfide bridge. The interval 117–136 (LNAQTRPDPQIGLNSQAGPK) is disordered.

The protein belongs to the YebF family.

Its subcellular location is the secreted. The sequence is that of Protein YebF from Yersinia pseudotuberculosis serotype O:1b (strain IP 31758).